The following is an 850-amino-acid chain: Pierisin (850 aa).

3 consecutive Ricin B-type lectin domains span residues 267–409 (GEFM…WNII), 413–560 (FRPI…WDIK), and 564–707 (YQYV…WYLK).

Belongs to the pierisin ADP-ribosyltransferase family.

The catalysed reaction is a 2'-deoxyguanosine in DNA + NAD(+) = an N(2)-(ADP-L-ribosyl)-2'-deoxyguanosine in DNA + nicotinamide + H(+). Functionally, ADP-ribosylates double-stranded DNA by targeting the N2 amino group of dG residues. Induces apoptosis in a range of human cell lines. May play a role in destroying cells during pupation and/or defense against parasites. The protein is Pierisin of Pieris brassicae (White butterfly).